We begin with the raw amino-acid sequence, 3579 residues long: Protocadherin-like wing polarity protein stan (3579 aa).

The N-terminal stretch at 1–29 (MQTREFPQRPLGLLLVLLVVLLQSSLIKS) is a signal peptide. Residues 30–2816 (YLIIVHEDTP…EPSLLVQITS (2787 aa)) are Extracellular-facing. N46, N179, and N340 each carry an N-linked (GlcNAc...) asparagine glycan. Cadherin domains are found at residues 360 to 464 (EQAL…SPTF), 465 to 581 (EAEQ…YPQF), 582 to 689 (SERT…APRF), 690 to 794 (YTSQ…DPAF), 795 to 897 (NPKY…APIF), 898 to 1007 (ENAP…APAF), 1008 to 1113 (KSPL…PPTF), and 1114 to 1220 (ASDK…APVL). Residue N671 is glycosylated (N-linked (GlcNAc...) asparagine). N886 carries an N-linked (GlcNAc...) asparagine glycan. Residues N1269, N1374, and N1441 are each glycosylated (N-linked (GlcNAc...) asparagine). Positions 1482 to 1518 (EVDLCYSDPCQNGGTCVRREGGYTCVCPSTHTGQNCE) constitute an EGF-like 1; calcium-binding domain. 3 disulfides stabilise this stretch: C1486/C1497, C1491/C1506, and C1508/C1517. Positions 1556–1753 (LRARAFGRNS…VADNGTLAGC (198 aa)) constitute a Laminin G-like 1 domain. Residues N1650, N1678, and N1747 are each glycosylated (N-linked (GlcNAc...) asparagine). 4 disulfide bridges follow: C1727–C1753, C1760–C1771, C1765–C1780, and C1782–C1791. One can recognise an EGF-like 2; calcium-binding domain in the interval 1756–1792 (KAPLCQSEPCFNGGTCREGWGTYSCECPEGYAGNSCQ). The region spanning 1796–1963 (PAPWRFSGDG…TIRENVEDGC (168 aa)) is the Laminin G-like 2 domain. N1843 carries N-linked (GlcNAc...) asparagine glycosylation. Disulfide bonds link C1937/C1963, C1969/C1979, C1973/C1988, and C1990/C1999. The EGF-like 3; calcium-binding domain occupies 1965-2000 (SRAQCPDHCPNHSSCQSSWDLSTCECDSGYVGTDCA). N-linked (GlcNAc...) asparagine glycosylation occurs at N1975. N-linked (GlcNAc...) asparagine glycosylation is found at N2016, N2028, N2071, and N2088. Cystine bridges form between C2092–C2095, C2097–C2114, C2116–C2125, and C2128–C2140. The region spanning 2095-2142 (CDCYSIGSFSGACNPLTGQCECREGVIGRRCDSCSNPYAEVTLSGCEV) is the Laminin EGF-like domain. N2196 and N2320 each carry an N-linked (GlcNAc...) asparagine glycan. Basic and acidic residues predominate over residues 2553-2562 (QETQRLEIPS). 3 disordered regions span residues 2553–2582 (QETQRLEIPSRKIFSSSSPSSSSSSGSTEQ), 2610–2635 (HEIPPPVSSVEQQEASSDEDGEEREP), and 2654–2684 (VISPDSPEMLNPNYEGVSSTGSDEQPKGENE). Residues 2567 to 2579 (SSSSPSSSSSSGS) are compositionally biased toward low complexity. The 151-residue stretch at 2653-2803 (EVISPDSPEM…AVIVDVIDPE (151 aa)) folds into the GAIN-B domain. Cystine bridges form between C2747/C2785 and C2762/C2787. Positions 2747 to 2803 (CVRWNSFTNQWTRLGCQTEIPDFDGDFNPAAQQAILVNCSCTHISSYAVIVDVIDPE) are GPS. N2784 carries an N-linked (GlcNAc...) asparagine glycan. A helical transmembrane segment spans residues 2817-2837 (YSAFLVSLPLLLGVLLALALL). Residues 2838-2845 (RGQQTNSN) lie on the Cytoplasmic side of the membrane. Residues 2846–2866 (TIHQNIVLCVFCAELLFFVGM) form a helical membrane-spanning segment. The Extracellular segment spans residues 2867-2883 (QSRRQLLESEFPCKLTA). The chain crosses the membrane as a helical span at residues 2884–2904 (ICLHYFWLAAFAWTTVDCVHL). Topologically, residues 2905–2919 (YRMLTEMRDINHGPM) are cytoplasmic. Residues 2920–2940 (GFYFAMGYGAPAIVVGLSVGV) traverse the membrane as a helical segment. Residues 2941–2959 (RAHEYGNSLFCWLSVYEPV) lie on the Extracellular side of the membrane. The helical transmembrane segment at 2960-2980 (VWWLVGPIAGMSVVNLLILFV) threads the bilayer. At 2981–3000 (SVKAAFTLKDHVLGFGNLRT) the chain is on the cytoplasmic side. A helical membrane pass occupies residues 3001-3021 (LLWLSVVSLPLMGVMWVLAVL). The Extracellular portion of the chain corresponds to 3022-3031 (AASEHSQLLS). Residues 3032-3052 (LLLSGVVLLHALFCLIGYCII) form a helical membrane-spanning segment. Topologically, residues 3053–3579 (NKRVRENLQR…RNIDDDETTV (527 aa)) are cytoplasmic. Disordered regions lie at residues 3111–3225 (GISA…TPAY), 3343–3377 (LYGRRGEYPDKYGSYKPPSHYGSEKDYPGGGSGSQ), 3458–3486 (YHQQQQQQQQHHLQDRLSEGSDKNGYHFP), and 3499–3579 (LSHT…ETTV). Residues 3113–3128 (SASSTTSRSTAKTSSS) show a composition bias toward low complexity. Basic and acidic residues predominate over residues 3167–3191 (RGGEEKPSRRQRKDSDSGSETDGRS). Phosphoserine occurs at positions 3199 and 3200. Polar residues predominate over residues 3208–3223 (ARSSGTHRSTAVSSTP). Over residues 3343–3352 (LYGRRGEYPD) the composition is skewed to basic and acidic residues. Over residues 3459–3468 (HQQQQQQQQH) the composition is skewed to low complexity. The span at 3469–3482 (HLQDRLSEGSDKNG) shows a compositional bias: basic and acidic residues. Polar residues predominate over residues 3501–3513 (HTQPPSLHGSQLM).

Belongs to the G-protein coupled receptor 2 family. As to quaternary structure, interacts with ATP6AP2 (via N-terminus). In terms of tissue distribution, in the pupal wing, expressed at relatively even levels in all regions. Abundant in 6-9 hours embryos. Expressed at higher levels in pupae than larvae.

It localises to the cell membrane. The protein localises to the apical cell membrane. In terms of biological role, involved in the fz signaling pathway that controls wing tissue polarity. Also mediates homophilic cell adhesion. May play a role in initiating prehair morphogenesis. May play a critical role in tissue polarity and in formation of normal dendrite fields. During planar cell polarity, stabilizes asymmetric PCP domains together with ATP6AP2. The polypeptide is Protocadherin-like wing polarity protein stan (stan) (Drosophila melanogaster (Fruit fly)).